An 83-amino-acid chain; its full sequence is uncharacterized protein (83 aa).

The segment at 57–83 (ESVEEEEEFEDYDEFEEEEEYYYDDEY) is disordered.

This is an uncharacterized protein from Archaeoglobus fulgidus (strain ATCC 49558 / DSM 4304 / JCM 9628 / NBRC 100126 / VC-16).